A 537-amino-acid chain; its full sequence is Phosphoenolpyruvate carboxykinase (ATP) (537 aa).

Residues R61, Y195, and K201 each contribute to the substrate site. ATP-binding positions include K201, H220, and 236–244 (GLSGTGKTT). Mn(2+)-binding residues include K201 and H220. Mn(2+) is bound at residue D257. Positions 285, 323, and 448 each coordinate ATP. R323 is a substrate binding site.

This sequence belongs to the phosphoenolpyruvate carboxykinase (ATP) family. Requires Mn(2+) as cofactor.

It is found in the cytoplasm. The enzyme catalyses oxaloacetate + ATP = phosphoenolpyruvate + ADP + CO2. Its pathway is carbohydrate biosynthesis; gluconeogenesis. Its function is as follows. Involved in the gluconeogenesis. Catalyzes the conversion of oxaloacetate (OAA) to phosphoenolpyruvate (PEP) through direct phosphoryl transfer between the nucleoside triphosphate and OAA. The sequence is that of Phosphoenolpyruvate carboxykinase (ATP) from Rhodopseudomonas palustris (strain HaA2).